The primary structure comprises 234 residues: Ubiquitin domain-containing protein 1 (234 aa).

Residues 1-47 (MGGCVGTHHDSSGSLNENSDGTGVALGRNQPLKKDKPKWKSDYPMTD) form a disordered region. Residues 12–21 (SGSLNENSDG) show a composition bias toward polar residues. Residues 32-41 (LKKDKPKWKS) are compositionally biased toward basic and acidic residues. The Ubiquitin-like domain maps to 152–227 (CQLRLRLSTG…VQVIVSQPIP (76 aa)).

In terms of biological role, may be involved in the regulation of cellular senescence through a positive feedback loop with TP53. In Xenopus laevis (African clawed frog), this protein is Ubiquitin domain-containing protein 1 (ubtd1).